Here is a 223-residue protein sequence, read N- to C-terminus: Serine/threonine/tyrosine-interacting protein (223 aa).

Residues 28 to 176 (EMQEILPGLF…LQEYEAIYLA (149 aa)) form the Tyrosine-protein phosphatase domain. Residues 76–78 (FQQ) carry the Interaction with FBXW7 motif. Phosphoserine is present on residues Ser-184, Ser-193, and Ser-201. The disordered stretch occupies residues 197–223 (GTTGSLKRTHEEEDDFGTMQVATAQNG).

This sequence belongs to the protein-tyrosine phosphatase family. Non-receptor class subfamily. Interacts with MAPK1; independently of MAPK1 phosphorylation status. Interacts with CARHSP1/Crhsp-24. Interacts (via FQQ motif) with FBXW7 (via F-box domain); the interaction is direct and prevents FBXW7 interaction with SKP1, a component of the SCF(FBXW7) complex.

The protein resides in the nucleus. It localises to the cytoplasm. It is found in the cytosol. Functionally, catalytically inactive phosphatase. Acts as a nuclear anchor for MAPK1/MAPK3 (ERK1/ERK2). Modulates cell-fate decisions and cell migration by spatiotemporal regulation of MAPK1/MAPK3 (ERK1/ERK2). By binding to the F-box of FBXW7, prevents the assembly of FBXW7 into the SCF E3 ubiquitin-protein ligase complex, and thereby inhibits degradation of its substrates. Plays a role in spermatogenesis. The chain is Serine/threonine/tyrosine-interacting protein (STYX) from Pongo abelii (Sumatran orangutan).